Consider the following 612-residue polypeptide: MLHVLSVGPSHAAFTVEAAMATMKKFHSIVGEKPAQDAEAPSVDDPNVGQIRADDKEAAHAPANAETNNEEANPSDGAQAGVKKIEAVTLSWTRGTAIWFLTLVNDFRLSMYTSLNAYATSSFLGHSLLTVINIVSYVMGGSVYIPMAKALDLWGRAEGFLLMTFFCILGLILLASSQNLPTYCAGQVFYKVGFGGLSYTWNVLAADVTNLRNRGLAFAFTSSPALISAFAGSKAASDLLAHSTWRWGFGMWAIILPVVALPIYGLLAYHLRQAEKKGVLVKETRDWSITPKTVWWAIMEFDLPGVLLFAGGFVIFLLPFTLAATAPHGYQTDYIIAMITLGLALIIAFGFYEMLVAPVPFLNYKFLIDRTVLGACLLDMTYQVSYYCYASYLPSFLQVVYELDVATAGYVTNTFSVVSFVFLFFAGWLIRWTGRFKWILWVCVPLYIFGLGLMIHFRQPGGYIGYIVMCEIFFSVAGSVFILCVQLAVLASVDHQHVAAVLALLFVMGSIGGSIGSAICGAIWTSTFLSRLERNLPASAMPDLSLIYSSLPTQLSYPVGSATRTAIVEAYGYAQARMLIAGTAFMVLGFIWVGMMRNLNVKNMTQTKGNVV.

Topologically, residues 1–86 (MLHVLSVGPS…GAQAGVKKIE (86 aa)) are cytoplasmic. Residues 55–78 (DKEAAHAPANAETNNEEANPSDGA) are disordered. Over residues 60-72 (HAPANAETNNEEA) the composition is skewed to low complexity. Residues 87–104 (AVTLSWTRGTAIWFLTLV) form a helical membrane-spanning segment. Over 105 to 127 (NDFRLSMYTSLNAYATSSFLGHS) the chain is Extracellular. Residues 128 to 148 (LLTVINIVSYVMGGSVYIPMA) traverse the membrane as a helical segment. The Cytoplasmic segment spans residues 149–156 (KALDLWGR). Residues 157–177 (AEGFLLMTFFCILGLILLASS) traverse the membrane as a helical segment. At 178 to 187 (QNLPTYCAGQ) the chain is on the extracellular side. A helical membrane pass occupies residues 188–208 (VFYKVGFGGLSYTWNVLAADV). Residues 209-215 (TNLRNRG) lie on the Cytoplasmic side of the membrane. A helical membrane pass occupies residues 216 to 236 (LAFAFTSSPALISAFAGSKAA). The Extracellular segment spans residues 237–246 (SDLLAHSTWR). Residues 247-267 (WGFGMWAIILPVVALPIYGLL) form a helical membrane-spanning segment. Residues 268 to 302 (AYHLRQAEKKGVLVKETRDWSITPKTVWWAIMEFD) lie on the Cytoplasmic side of the membrane. The helical transmembrane segment at 303 to 323 (LPGVLLFAGGFVIFLLPFTLA) threads the bilayer. At 324–334 (ATAPHGYQTDY) the chain is on the extracellular side. Residues 335–355 (IIAMITLGLALIIAFGFYEML) form a helical membrane-spanning segment. The Cytoplasmic segment spans residues 356-370 (VAPVPFLNYKFLIDR). Residues 371–393 (TVLGACLLDMTYQVSYYCYASYL) traverse the membrane as a helical segment. At 394-409 (PSFLQVVYELDVATAG) the chain is on the extracellular side. A helical membrane pass occupies residues 410-430 (YVTNTFSVVSFVFLFFAGWLI). Residues 431 to 435 (RWTGR) lie on the Cytoplasmic side of the membrane. Residues 436 to 456 (FKWILWVCVPLYIFGLGLMIH) traverse the membrane as a helical segment. The Extracellular portion of the chain corresponds to 457–463 (FRQPGGY). Residues 464–484 (IGYIVMCEIFFSVAGSVFILC) traverse the membrane as a helical segment. Residues 485-498 (VQLAVLASVDHQHV) lie on the Cytoplasmic side of the membrane. Residues 499-519 (AAVLALLFVMGSIGGSIGSAI) form a helical membrane-spanning segment. The Extracellular portion of the chain corresponds to 520–575 (CGAIWTSTFLSRLERNLPASAMPDLSLIYSSLPTQLSYPVGSATRTAIVEAYGYAQ). Residues 576-596 (ARMLIAGTAFMVLGFIWVGMM) form a helical membrane-spanning segment. The Cytoplasmic segment spans residues 597-612 (RNLNVKNMTQTKGNVV).

This sequence belongs to the major facilitator superfamily.

The protein localises to the cell tip. The protein resides in the cytoplasmic vesicle membrane. It localises to the cell membrane. Its function is as follows. Major facilitator transporter involved in triacetylfusarinine C (TAFC) uptake. Can also transport ferricrocin and coprogen, but not ferrichrysin. MirB plays a crucial role for virulence in a murine model of pulmonary aspergillosis, indicating that TAFC-mediated iron uptake plays a dominant role during infection. The protein is MFS siderochrome iron transporter B of Aspergillus fumigatus (strain ATCC MYA-4609 / CBS 101355 / FGSC A1100 / Af293) (Neosartorya fumigata).